The sequence spans 82 residues: 4-(gamma-L-glutamylamino)butanoyl-[BtrI acyl-carrier protein] monooxygenase BtrO (82 aa).

Homotetramer.

The catalysed reaction is 4-(gamma-L-glutamylamino)butanoyl-[BtrI ACP] + FMNH2 + O2 = 4-(gamma-L-glutamylamino)-(2S)-2-hydroxybutanoyl-[BtrI ACP] + FMN + H2O + H(+). It functions in the pathway antibiotic biosynthesis; butirosin biosynthesis. In terms of biological role, NAD(P)H:FMN oxidoreductase component of a two-component system involved in the biosynthesis of the side chain of the aminoglycoside antibiotics in the biosynthetic pathway of butirosin. Together with BtrO, mediates hydroxylation of gamma-L-Glu-GABA-S-BtrI. The sequence is that of 4-(gamma-L-glutamylamino)butanoyl-[BtrI acyl-carrier protein] monooxygenase BtrO (btrV) from Niallia circulans (Bacillus circulans).